The following is a 759-amino-acid chain: Subtilisin-like serine-protease S (759 aa).

Residues 1-22 (MGSAKILSFTLLLFVGYTLVHG) form the signal peptide. An Inhibitor I9 domain is found at 28 to 105 (YIVYMGDRSH…SVFESKMNKL (78 aa)). The 504-residue stretch at 110–613 (SWDFLGLDTV…SGHVNPVASL (504 aa)) folds into the Peptidase S8 domain. The active-site Charge relay system is aspartate 139. Asparagine 170 is a glycosylation site (N-linked (GlcNAc...) asparagine). The Charge relay system role is filled by histidine 215. Residues asparagine 230 and asparagine 388 are each glycosylated (N-linked (GlcNAc...) asparagine). The PA domain occupies 390–462 (SFCKEHTLDP…MIGQDAVEEL (73 aa)). The active-site Charge relay system is serine 545. 3 N-linked (GlcNAc...) asparagine glycosylation sites follow: asparagine 593, asparagine 642, and asparagine 671.

It belongs to the peptidase S8 family.

The protein localises to the secreted. Its subcellular location is the extracellular space. It localises to the apoplast. Functionally, required for arbuscular mycorrhiza (AM) development during AM symbiosis with AM fungi (e.g. Glomeromycota intraradices). The polypeptide is Subtilisin-like serine-protease S (Lotus japonicus (Lotus corniculatus var. japonicus)).